We begin with the raw amino-acid sequence, 617 residues long: MSSLPTSDGFNHPARSSGQSPDVGNPMSLARSVSASVCPIKPSDSDRIEPKAVKALKASAEFQLNSEKKEHLSLQDLSDHASSADHAPTDQSPAMPMQNSSEEITVAGNLEKSAERSTQGLKFHLHTRQEASLSVTSTRMHEPQMFLGEKDWHPENQNLSQVSDPQQHEEPGNEQYEVAQQKASHDQEYLCNIGDLELPEERQQNQHKIVDLEATMKGNGLPQNVDPPSAKKSIPSSECSGCSNSETFMEIDTAQQSLVTLLNSTGRQNANVKNIGALDLTLDNPLMEVETSKCNPSSEILNDSISTQDLQPPETNVEIPGTNKEYGHYSSPSLCGSCQPSVESAEESCPSITAALKELHELLVVSSKPASENTSEEVICQSETIAEGQTSIKDLSERWTQNEHLTQNEQCPQVSFHQAISVSVETEKLTGTSSDTGREAVENVNFRSLGDGLSTDKEGVPKSRESINKNRSVTVTSAKTSNQLHCTLGVEISPKLLAGEEDALNQTSEQTKSLSSNFILVKDLGQGIQNSVTDRPETRENVCPDASRPLLEYEPPTSHPSSSPAILPPLIFPATDIDRILRAGFTLQEALGALHRVGGNADLALLVLLAKNIVVPT.

Positions 1 to 22 (MSSLPTSDGFNHPARSSGQSPD) are enriched in polar residues. Disordered regions lie at residues 1–106 (MSSL…EITV), 155–181 (ENQN…VAQQ), and 217–237 (KGNG…IPSS). Composition is skewed to basic and acidic residues over residues 43–52 (SDSDRIEPKA) and 66–83 (SEKK…HASS). Composition is skewed to polar residues over residues 89-103 (TDQS…SSEE) and 155-165 (ENQNLSQVSDP). Residues 410 to 412 (QCP) are involved in post-transcriptional down-regulation of SLC5A1. Residues 571-611 (IFPATDIDRILRAGFTLQEALGALHRVGGNADLALLVLLAK) form the UBA domain.

As to quaternary structure, interacts with YRDC. Expressed in small intestine, kidney and brain.

It localises to the cell membrane. Its subcellular location is the nucleus. The protein localises to the golgi apparatus. It is found in the trans-Golgi network. Mediates transcriptional and post-transcriptional regulation of SLC5A1. Inhibits a dynamin and PKC-dependent exocytotic pathway of SLC5A1. Also involved in transcriptional regulation of SLC22A2. Exhibits glucose-dependent, short-term inhibition of SLC5A1 and SLC22A2 by inhibiting the release of vesicles from the trans-Golgi network. This is Regulatory solute carrier protein family 1 member 1 (RSC1A1) from Homo sapiens (Human).